The primary structure comprises 98 residues: Defensin-A (98 aa).

Positions 1-18 (MKSITVICFLALCTVAIT) are cleaved as a signal peptide. Residues 19 to 58 (SAYPQEPVLADEARPFANSLFDELPEETYQAAVENFRLKR) constitute a propeptide that is removed on maturation. 3 cysteine pairs are disulfide-bonded: C61-C88, C74-C94, and C78-C96.

This sequence belongs to the invertebrate defensin family. Type 1 subfamily.

Its subcellular location is the secreted. Antibacterial peptide mostly active against Gram-positive bacteria. Has activity against the bacteria Gram-negative E.cloacae beta12. This Aedes aegypti (Yellowfever mosquito) protein is Defensin-A (DEFA).